A 102-amino-acid chain; its full sequence is Thioredoxin (102 aa).

Positions methionine 1–glutamine 102 constitute a Thioredoxin domain. A disulfide bridge links cysteine 28 with cysteine 31.

Belongs to the thioredoxin family.

Participates in various redox reactions through the reversible oxidation of its active center dithiol to a disulfide and catalyzes dithiol-disulfide exchange reactions. The polypeptide is Thioredoxin (trxA) (Chlamydia trachomatis serovar D (strain ATCC VR-885 / DSM 19411 / UW-3/Cx)).